The following is a 457-amino-acid chain: Bifunctional protein GlmU (457 aa).

Residues 1 to 229 (MYNCAIILAA…YEEIMGVNSR (229 aa)) form a pyrophosphorylase region. UDP-N-acetyl-alpha-D-glucosamine-binding positions include 8–11 (LAAG), Lys-22, Gln-73, and 78–79 (GT). Asp-103 contacts Mg(2+). UDP-N-acetyl-alpha-D-glucosamine contacts are provided by Gly-140, Glu-155, Asn-170, and Asn-227. Asn-227 lines the Mg(2+) pocket. The tract at residues 230 to 250 (VQLSEAEIVMRKRINHKHMVN) is linker. Positions 251-457 (GVTFIDCEST…WLDKKGLLKK (207 aa)) are N-acetyltransferase. UDP-N-acetyl-alpha-D-glucosamine-binding residues include Arg-332 and Lys-350. His-362 functions as the Proton acceptor in the catalytic mechanism. Residues Tyr-365 and Asn-376 each contribute to the UDP-N-acetyl-alpha-D-glucosamine site. Residues 385-386 (NY), Ala-422, and Arg-439 contribute to the acetyl-CoA site.

This sequence in the N-terminal section; belongs to the N-acetylglucosamine-1-phosphate uridyltransferase family. In the C-terminal section; belongs to the transferase hexapeptide repeat family. As to quaternary structure, homotrimer. Requires Mg(2+) as cofactor.

Its subcellular location is the cytoplasm. The enzyme catalyses alpha-D-glucosamine 1-phosphate + acetyl-CoA = N-acetyl-alpha-D-glucosamine 1-phosphate + CoA + H(+). It carries out the reaction N-acetyl-alpha-D-glucosamine 1-phosphate + UTP + H(+) = UDP-N-acetyl-alpha-D-glucosamine + diphosphate. The protein operates within nucleotide-sugar biosynthesis; UDP-N-acetyl-alpha-D-glucosamine biosynthesis; N-acetyl-alpha-D-glucosamine 1-phosphate from alpha-D-glucosamine 6-phosphate (route II): step 2/2. Its pathway is nucleotide-sugar biosynthesis; UDP-N-acetyl-alpha-D-glucosamine biosynthesis; UDP-N-acetyl-alpha-D-glucosamine from N-acetyl-alpha-D-glucosamine 1-phosphate: step 1/1. It functions in the pathway bacterial outer membrane biogenesis; LPS lipid A biosynthesis. Catalyzes the last two sequential reactions in the de novo biosynthetic pathway for UDP-N-acetylglucosamine (UDP-GlcNAc). The C-terminal domain catalyzes the transfer of acetyl group from acetyl coenzyme A to glucosamine-1-phosphate (GlcN-1-P) to produce N-acetylglucosamine-1-phosphate (GlcNAc-1-P), which is converted into UDP-GlcNAc by the transfer of uridine 5-monophosphate (from uridine 5-triphosphate), a reaction catalyzed by the N-terminal domain. The protein is Bifunctional protein GlmU of Clostridium botulinum (strain Langeland / NCTC 10281 / Type F).